The sequence spans 967 residues: Aminopeptidase N (967 aa).

The Cytoplasmic portion of the chain corresponds to 2-8 (AKGFYIS). The chain crosses the membrane as a helical; Signal-anchor for type II membrane protein span at residues 9 to 32 (KSLGILGILLGVAAVCTIIALSVV). Positions 33-68 (YSQEKNKNANSSPVASTTPSASATTNPASATTLDQS) are cytosolic Ser/Thr-rich junction. The Extracellular segment spans residues 33 to 967 (YSQEKNKNAN…VLQWFTENSK (935 aa)). The interval 40-62 (NANSSPVASTTPSASATTNPASA) is disordered. Low complexity predominate over residues 41–62 (ANSSPVASTTPSASATTNPASA). Residues 69 to 967 (KAWNRYRLPN…VLQWFTENSK (899 aa)) are metalloprotease. A glycan (N-linked (GlcNAc...) asparagine) is linked at asparagine 128. Tyrosine 176 bears the Sulfotyrosine mark. Asparagine 234 and asparagine 265 each carry an N-linked (GlcNAc...) asparagine glycan. The necessary and sufficient to mediate interaction with HCoV-229E stretch occupies residues 288–295 (DYVEKQAS). N-linked (GlcNAc...) asparagine glycosylation occurs at asparagine 319. A substrate-binding site is contributed by 352-356 (GAMEN). Histidine 388 lines the Zn(2+) pocket. Glutamate 389 serves as the catalytic Proton acceptor. Residues histidine 392 and glutamate 411 each contribute to the Zn(2+) site. Sulfotyrosine occurs at positions 419 and 424. 5 N-linked (GlcNAc...) asparagine glycosylation sites follow: asparagine 527, asparagine 573, asparagine 625, asparagine 681, and asparagine 735. 2 disulfides stabilise this stretch: cysteine 761/cysteine 768 and cysteine 798/cysteine 834. The N-linked (GlcNAc...) asparagine glycan is linked to asparagine 818. Sulfotyrosine is present on tyrosine 913.

It belongs to the peptidase M1 family. In terms of assembly, homodimer. Interacts with SLC6A19. As to quaternary structure, (Microbial infection) Interacts with the S1 domain of human coronavirus 229E/HCoV-229E spike protein. The cofactor is Zn(2+). Post-translationally, sulfated. N- and O-glycosylated. In terms of processing, may undergo proteolysis and give rise to a soluble form. As to expression, expressed in epithelial cells of the kidney, intestine, and respiratory tract; granulocytes, monocytes, fibroblasts, endothelial cells, cerebral pericytes at the blood-brain barrier, synaptic membranes of cells in the CNS. Also expressed in endometrial stromal cells, but not in the endometrial glandular cells. Found in the vasculature of tissues that undergo angiogenesis and in malignant gliomas and lymph node metastases from multiple tumor types but not in blood vessels of normal tissues. A soluble form has been found in plasma. It is found to be elevated in plasma and effusions of cancer patients.

The protein localises to the cell membrane. It carries out the reaction Release of an N-terminal amino acid, Xaa-|-Yaa- from a peptide, amide or arylamide. Xaa is preferably Ala, but may be most amino acids including Pro (slow action). When a terminal hydrophobic residue is followed by a prolyl residue, the two may be released as an intact Xaa-Pro dipeptide.. Functionally, broad specificity aminopeptidase which plays a role in the final digestion of peptides generated from hydrolysis of proteins by gastric and pancreatic proteases. Also involved in the processing of various peptides including peptide hormones, such as angiotensin III and IV, neuropeptides, and chemokines. May also be involved the cleavage of peptides bound to major histocompatibility complex class II molecules of antigen presenting cells. May have a role in angiogenesis and promote cholesterol crystallization. May have a role in amino acid transport by acting as binding partner of amino acid transporter SLC6A19 and regulating its activity. In terms of biological role, (Microbial infection) Acts as a receptor for human coronavirus 229E/HCoV-229E. In case of human coronavirus 229E (HCoV-229E) infection, serves as receptor for HCoV-229E spike glycoprotein. Its function is as follows. (Microbial infection) Mediates as well Human cytomegalovirus (HCMV) infection. In Homo sapiens (Human), this protein is Aminopeptidase N (ANPEP).